We begin with the raw amino-acid sequence, 485 residues long: Aspartyl/glutamyl-tRNA(Asn/Gln) amidotransferase subunit B (485 aa).

Belongs to the GatB/GatE family. GatB subfamily. As to quaternary structure, heterotrimer of A, B and C subunits.

The enzyme catalyses L-glutamyl-tRNA(Gln) + L-glutamine + ATP + H2O = L-glutaminyl-tRNA(Gln) + L-glutamate + ADP + phosphate + H(+). It carries out the reaction L-aspartyl-tRNA(Asn) + L-glutamine + ATP + H2O = L-asparaginyl-tRNA(Asn) + L-glutamate + ADP + phosphate + 2 H(+). Its function is as follows. Allows the formation of correctly charged Asn-tRNA(Asn) or Gln-tRNA(Gln) through the transamidation of misacylated Asp-tRNA(Asn) or Glu-tRNA(Gln) in organisms which lack either or both of asparaginyl-tRNA or glutaminyl-tRNA synthetases. The reaction takes place in the presence of glutamine and ATP through an activated phospho-Asp-tRNA(Asn) or phospho-Glu-tRNA(Gln). This Opitutus terrae (strain DSM 11246 / JCM 15787 / PB90-1) protein is Aspartyl/glutamyl-tRNA(Asn/Gln) amidotransferase subunit B.